The sequence spans 232 residues: Uracil phosphoribosyltransferase (232 aa).

Residue 38–42 (KGLVR) participates in GTP binding. Residues arginine 87, arginine 112, and 140 to 148 (DPMIATGST) each bind 5-phospho-alpha-D-ribose 1-diphosphate. Residues isoleucine 204 and 209 to 211 (GDA) each bind uracil. Aspartate 210 serves as a coordination point for 5-phospho-alpha-D-ribose 1-diphosphate.

It belongs to the UPRTase family. The cofactor is Mg(2+).

The catalysed reaction is UMP + diphosphate = 5-phospho-alpha-D-ribose 1-diphosphate + uracil. Its pathway is pyrimidine metabolism; UMP biosynthesis via salvage pathway; UMP from uracil: step 1/1. Its activity is regulated as follows. Allosterically activated by GTP. Its function is as follows. Catalyzes the conversion of uracil and 5-phospho-alpha-D-ribose 1-diphosphate (PRPP) to UMP and diphosphate. The chain is Uracil phosphoribosyltransferase from Methanococcus vannielii (strain ATCC 35089 / DSM 1224 / JCM 13029 / OCM 148 / SB).